Consider the following 324-residue polypeptide: Mevalonate-3-kinase (324 aa).

Residue L19 coordinates substrate. An ATP-binding site is contributed by 109 to 112 (SGSS). Substrate contacts are provided by E145 and R149. Positions 190 and 193 each coordinate ATP.

This sequence belongs to the GHMP kinase family. Homodimer.

The enzyme catalyses (R)-mevalonate + ATP = (R)-3-phosphomevalonate + ADP + H(+). The protein operates within isoprenoid biosynthesis; isopentenyl diphosphate biosynthesis via mevalonate pathway. Catalyzes the phosphorylation of mevalonate (MVA) to yield mevalonate-3-phosphate. Functions in an alternative mevalonate pathway, which passes through mevalonate 3-phosphate rather than mevalonate 5-phosphate. Also able to catalyze the formation of isobutene via the conversion of 3-hydroxyisovalerate (3-HIV) to an unstable 3-phosphate intermediate that undergoes a spontaneous decarboxylation. The sequence is that of Mevalonate-3-kinase from Picrophilus torridus (strain ATCC 700027 / DSM 9790 / JCM 10055 / NBRC 100828 / KAW 2/3).